Reading from the N-terminus, the 1491-residue chain is Membrane-associated guanylate kinase, WW and PDZ domain-containing protein 1 (1491 aa).

A PDZ 1 domain is found at 17–105; sequence ECTVKRGPQG…AVTFKAVRQG (89 aa). The Guanylate kinase-like domain maps to 96-287; sequence AVTFKAVRQG…APITDPSQKF (192 aa). Residue 103–110 coordinates ATP; it reads RQGGRLNK. A disordered region spans residues 236 to 267; sequence AENEEEDDVPEMNSSFTADSGEQEEHTLQETA. The WW 1 domain maps to 300–333; it reads GPLPENWEMAYTENGEVYFIDHNTKTTSWLDPRC. Ser-357 is modified (phosphoserine). The WW 2 domain maps to 359–392; that stretch reads LELPAGWEKIEDPVYGIYYVDHINRKTQYENPVL. The span at 411-421 shows a compositional bias: low complexity; sequence QQQQQQQQQQQ. Residues 411–462 are disordered; sequence QQQQQQQQQQQTEEWTEDHSALVPPVIPNHPPSNPEPAREVPLQGKPFFTRN. Positions 435-445 are enriched in pro residues; sequence PVIPNHPPSNP. One can recognise a PDZ 2 domain in the interval 472 to 554; sequence HTKLRKSSRG…GASVDLELCR (83 aa). Residues 586–600 show a composition bias toward polar residues; the sequence is QETYDSPASHSSKTG. 3 disordered regions span residues 586-623, 720-832, and 932-987; these read QETY…SSHG, QRGG…FGEC, and TENE…GGGS. Positions 643–721 constitute a PDZ 3 domain; that stretch reads TVHIVKGPMG…GSEVTLLVQR (79 aa). Phosphoserine occurs at positions 730 and 741. Low complexity predominate over residues 742–752; it reads QNSSQHSVSSH. Positions 756–766 are enriched in polar residues; it reads HTASPSHSTQV. Ser-800 carries the phosphoserine modification. The PDZ 4 domain maps to 813–895; it reads SGLSKGERER…DELICVDGTP (83 aa). Residues 939–951 show a composition bias toward polar residues; sequence PASSHHSSNQPAS. The PDZ 5 domain maps to 970–1066; sequence SSGSGSTSGI…DRILAVNGCS (97 aa). Residues 970–1066 form an interaction with FCHSD2 region; it reads SSGSGSTSGI…DRILAVNGCS (97 aa). Over residues 975–987 the composition is skewed to gly residues; sequence STSGIGSGGGGGS. Residue Ser-1071 is modified to Phosphoserine. The span at 1112-1130 shows a compositional bias: polar residues; it reads TTTHTPSQQGTQETRNTTK. 2 disordered regions span residues 1112–1143 and 1234–1491; these read TTTH…KAPQ and DGSV…DLSI. The PDZ 6 domain maps to 1124-1206; the sequence is ETRNTTKPKQ…DEILEINGET (83 aa). Composition is skewed to basic and acidic residues over residues 1278-1338, 1354-1396, and 1403-1491; these read DLHK…DAQA, KRRE…DGSP, and LERL…DLSI. Phosphoserine occurs at positions 1361 and 1412.

In terms of assembly, part of a complex composed of AMOTL2, MAGI1 and CDH5, within the complex AMOTL2 acts as a scaffold protein for the interaction of MAGI1 with CDH5. The complex is required for coupling actin fibers to cell junctions in endothelial cells. Interacts through its WW 2 domain with SYNPO and through its PDZ 5 domain with ACTN4. Interacts with cytoplasmic domain of ADGRB1. Interacts via its WW domains with DRPLA. Interacts with ESAM, LRP2 and CXADR. May interact with CTNNB1. Interacts through its PDZ 1 domain with NET1. Interacts with ASIC3 and AMOT. Interacts with FCHSD2. Interacts with IGSF5/JAM4 and through its PDZ 2 and 3 domains with NPHS1 forming a tripartite complex. Interacts with DDN. Interacts with DLL1. Interacts with KCNJ10 and possibly with KCNJ10/KCNJ16 heterodimer; this interaction may facilitate KCNJ10/KCNJ16 potassium channel expression at the basolateral membrane in kidney tubular cells. Interacts with PRRG4 (via cytoplasmic domain). Interacts (via PDZ domain) with RAPGEF2. As to expression, widely expressed with the exception of skeletal muscle. Isoform 1, isoform 2 and isoform 6 are highly expressed in colon, kidney, lung, liver, and pancreas. Isoform 5 is predominantly expressed in brain and heart. Isoform 3 and isoform 4 are highly expressed in pancreas and brain.

The protein localises to the cell junction. Its subcellular location is the tight junction. It localises to the cell membrane. Its function is as follows. Plays a role in coupling actin fibers to cell junctions in endothelial cells, via its interaction with AMOTL2 and CDH5. May regulate acid-induced ASIC3 currents by modulating its expression at the cell surface. The sequence is that of Membrane-associated guanylate kinase, WW and PDZ domain-containing protein 1 (MAGI1) from Homo sapiens (Human).